We begin with the raw amino-acid sequence, 426 residues long: Adenylosuccinate synthetase (426 aa).

GTP contacts are provided by residues Gly-12–Lys-18 and Gly-40–Thr-42. Residue Asp-13 is the Proton acceptor of the active site. Asp-13 and Gly-40 together coordinate Mg(2+). IMP is bound by residues Asp-13–Lys-16, Asn-38–His-41, Thr-125, Arg-139, Gln-221, Thr-236, and Arg-300. Catalysis depends on His-41, which acts as the Proton donor. Thr-296–Arg-302 is a binding site for substrate. Residues Arg-302, Lys-328–Asp-330, and Ala-410–Gly-412 each bind GTP.

It belongs to the adenylosuccinate synthetase family. Homodimer. The cofactor is Mg(2+).

It is found in the cytoplasm. It catalyses the reaction IMP + L-aspartate + GTP = N(6)-(1,2-dicarboxyethyl)-AMP + GDP + phosphate + 2 H(+). The protein operates within purine metabolism; AMP biosynthesis via de novo pathway; AMP from IMP: step 1/2. In terms of biological role, plays an important role in the de novo pathway of purine nucleotide biosynthesis. Catalyzes the first committed step in the biosynthesis of AMP from IMP. This Syntrophomonas wolfei subsp. wolfei (strain DSM 2245B / Goettingen) protein is Adenylosuccinate synthetase.